A 111-amino-acid polypeptide reads, in one-letter code: MSKQNLEEIIQTGIADTELSTEISTAIKRPRKYKVLLLNDDYTPMDFVVEVLKHFFHLNEEVAIQVMLQVHFQGKGVCGVFTRDIAETKVALVNEYARMNQHPLLSSMEPE.

Belongs to the ClpS family. As to quaternary structure, binds to the N-terminal domain of the chaperone ClpA.

Its function is as follows. Involved in the modulation of the specificity of the ClpAP-mediated ATP-dependent protein degradation. The polypeptide is ATP-dependent Clp protease adapter protein ClpS (Legionella pneumophila (strain Paris)).